The sequence spans 275 residues: Protein unc-50 homolog (275 aa).

Polar residues predominate over residues 1 to 26; that stretch reads MTQYSHVKYTQSPTPSVVSGYSSASR. The interval 1–39 is disordered; sequence MTQYSHVKYTQSPTPSVVSGYSSASRLHSPLPPPANHRR. Over 1–99 the chain is Cytoplasmic; it reads MTQYSHVKYT…TKSQFARDDP (99 aa). The helical transmembrane segment at 100–120 threads the bilayer; that stretch reads AFLVLLVVCLCVTSLGFAYVL. Over 121–129 the chain is Lumenal; sequence GLSFWQSIS. A helical transmembrane segment spans residues 130–150; sequence FIFYVVFVDCIFVGIIIASFF. The Cytoplasmic segment spans residues 151-178; the sequence is WAVTNRYLRTNSLEPDIEWGYAFDVHLN. Residues 179–199 traverse the membrane as a helical segment; that stretch reads AFFPPLMLLHFIQLFFYNWLI. Residues 200 to 207 are Lumenal-facing; sequence SQTWFISR. Residues 208–228 form a helical membrane-spanning segment; the sequence is FLGNTFWLMGMGYYVYITFLG. At 229 to 239 the chain is on the cytoplasmic side; the sequence is YNCIPHLKNTR. A helical membrane pass occupies residues 240–260; the sequence is IILIALPIIFLLFLVVTIIGW. Residues 261-275 are Lumenal-facing; that stretch reads NATISFVNFYKYRVY.

Belongs to the unc-50 family.

The protein resides in the golgi apparatus membrane. Functionally, required for cell surface expression of acetylcholine receptors. The protein is Protein unc-50 homolog of Drosophila melanogaster (Fruit fly).